The following is a 140-amino-acid chain: Nucleoside diphosphate kinase (140 aa).

ATP is bound by residues lysine 11, phenylalanine 59, arginine 87, threonine 93, arginine 104, and asparagine 114. The active-site Pros-phosphohistidine intermediate is the histidine 117.

It belongs to the NDK family. As to quaternary structure, homotetramer. Mg(2+) serves as cofactor.

It is found in the cytoplasm. The catalysed reaction is a 2'-deoxyribonucleoside 5'-diphosphate + ATP = a 2'-deoxyribonucleoside 5'-triphosphate + ADP. It carries out the reaction a ribonucleoside 5'-diphosphate + ATP = a ribonucleoside 5'-triphosphate + ADP. Its function is as follows. Major role in the synthesis of nucleoside triphosphates other than ATP. The ATP gamma phosphate is transferred to the NDP beta phosphate via a ping-pong mechanism, using a phosphorylated active-site intermediate. In Paracoccus denitrificans (strain Pd 1222), this protein is Nucleoside diphosphate kinase.